The sequence spans 364 residues: 3'(2'),5'-bisphosphate nucleotidase 1 (364 aa).

Asp54 (proton acceptor) is an active-site residue. Positions 77, 141, 143, and 144 each coordinate Mg(2+). The Proton acceptor role is filled by Thr146. Thr146, His243, Ser272, Lys275, Arg289, and Asp302 together coordinate adenosine 3',5'-bisphosphate. Residues His243, Ser272, Lys275, Arg289, and Asp302 each contribute to the AMP site. Asp302 provides a ligand contact to Mg(2+).

Belongs to the inositol monophosphatase superfamily. Mg(2+) is required as a cofactor.

It catalyses the reaction 3'-phosphoadenylyl sulfate + H2O = adenosine 5'-phosphosulfate + phosphate. It carries out the reaction adenosine 3',5'-bisphosphate + H2O = AMP + phosphate. The enzyme catalyses adenosine 2',5'-bisphosphate + H2O = AMP + phosphate. Its function is as follows. Phosphatase that converts adenosine 3'-phosphate 5'-phosphosulfate (PAPS) to adenosine 5'-phosphosulfate (APS) and 3'(2')-phosphoadenosine 5'-phosphate (PAP) to AMP. Regulates the flux of sulfur in the sulfur-activation pathway by converting PAPS to APS. Involved in salt tolerance. This Candida albicans (strain WO-1) (Yeast) protein is 3'(2'),5'-bisphosphate nucleotidase 1 (HAL21).